The primary structure comprises 316 residues: Calumenin-B (316 aa).

Residues 1–19 (MELRPLVMCFALCVVYASS) form the signal peptide. 6 consecutive EF-hand domains span residues 69–104 (ESKE…SQKR), 105–140 (WIYD…YILD), 152–187 (QMIS…EEYD), 189–224 (MKDI…QEGD), 230–265 (WVRT…SDYD), and 266–301 (HAEA…FVGS). Asp-82, Asp-84, Asp-86, Tyr-88, Glu-93, Asp-118, Asn-120, Asp-122, and Glu-129 together coordinate Ca(2+). An N-linked (GlcNAc...) asparagine glycan is attached at Asn-132. Positions 165, 167, 169, 171, 176, 202, 204, 206, 213, 243, 245, 247, 249, 254, 279, 281, 283, 285, and 290 each coordinate Ca(2+). The short motif at 313 to 316 (HDEF) is the Prevents secretion from ER element.

The protein belongs to the CREC family. In terms of assembly, interacts with ggcx.

The protein resides in the endoplasmic reticulum membrane. The protein localises to the golgi apparatus. Its subcellular location is the secreted. It is found in the melanosome. It localises to the sarcoplasmic reticulum lumen. In terms of biological role, involved in regulation of vitamin K-dependent carboxylation of multiple N-terminal glutamate residues. Seems to inhibit gamma-carboxylase ggcx. Binds 7 calcium ions with a low affinity. This chain is Calumenin-B (calub), found in Salmo salar (Atlantic salmon).